A 1911-amino-acid chain; its full sequence is Adenylate kinase 9 (1911 aa).

The tract at residues 31–285 (VCFVVFGKPG…LFMIVMDRLK (255 aa)) is adenylate kinase 1. An ATP-binding site is contributed by 40–45 (GVGKTT). Positions 60–89 (EALPILEEQIAAETESGVMLQSMLISGQSI) are NMP 1. Residues 87-89 (QSI) and 116-119 (EIPS) each bind AMP. The tract at residues 160 to 205 (GQRQHNNTGYIYSRDQWDPEVIENHRKKKKEAQKDGKGEEEEEEEE) is LID 1. Positions 185-210 (RKKKKEAQKDGKGEEEEEEEEQEEEE) are disordered. Residues 197–210 (GEEEEEEEEQEEEE) show a composition bias toward acidic residues. Residue arginine 229 coordinates AMP. Coiled coils occupy residues 443–485 (AEAT…EFGV) and 676–711 (LQKK…TEEE). Disordered regions lie at residues 728 to 796 (KAKE…TEIP) and 892 to 926 (DYEE…KERK). Residues 733–750 (EETDNEDEEEIEGDELEV) are compositionally biased toward acidic residues. A compositionally biased stretch (basic and acidic residues) spans 751-761 (HEEPEASHDTR). Acidic residues-rich tracts occupy residues 767-791 (EEFE…ETTV) and 892-919 (DYEE…EEGE). Adenylate kinase stretches follow at residues 992 to 1203 (LRIC…ELIL) and 1412 to 1601 (IRII…KNVQ). Residue 1001-1006 (GSGKTM) participates in ATP binding. The tract at residues 1021-1052 (QFEEVLQEKLLLKTEKKVGPEFEEDSENEQAA) is NMP 2. AMP is bound by residues 1050–1052 (QAA) and 1079–1082 (VQLT). An LID 2 region spans residues 1124-1144 (DGFPRYPEEAQFLGDRGFFPD). An ATP-binding site is contributed by 1421–1426 (KSGKTT). The tract at residues 1441-1472 (SIGGALRYVLNNHPETELALMLNWHLHKGMTA) is NMP 3. AMP is bound by residues arginine 1447, 1470–1472 (MTA), 1499–1502 (GYPV), glutamine 1506, and arginine 1543. Positions 1536–1550 (LEKENEQRLPYPLHN) are LID 3.

The protein belongs to the adenylate kinase family.

The protein localises to the cytoplasm. Its subcellular location is the nucleus. It is found in the cell projection. The protein resides in the cilium. It localises to the flagellum. The catalysed reaction is a ribonucleoside 5'-phosphate + ATP = a ribonucleoside 5'-diphosphate + ADP. The enzyme catalyses AMP + ATP = 2 ADP. It carries out the reaction GTP + AMP = GDP + ADP. It catalyses the reaction CMP + ATP = CDP + ADP. The catalysed reaction is GTP + CMP = CDP + GDP. The enzyme catalyses dAMP + ATP = dADP + ADP. It carries out the reaction dCMP + ATP = dCDP + ADP. It catalyses the reaction a ribonucleoside 5'-diphosphate + ATP = a ribonucleoside 5'-triphosphate + ADP. The catalysed reaction is CDP + ATP = CTP + ADP. The enzyme catalyses CDP + GTP = CTP + GDP. It carries out the reaction GDP + ATP = GTP + ADP. It catalyses the reaction UDP + ATP = UTP + ADP. The catalysed reaction is GTP + UDP = UTP + GDP. The enzyme catalyses dTDP + GTP = dTTP + GDP. It carries out the reaction dCDP + ATP = dCTP + ADP. It catalyses the reaction dCDP + GTP = dCTP + GDP. The catalysed reaction is dGDP + ATP = dGTP + ADP. The enzyme catalyses dTDP + ATP = dTTP + ADP. It carries out the reaction dADP + GTP = dATP + GDP. In terms of biological role, broad-specificity nucleoside phosphate kinase involved in cellular nucleotide homeostasis by catalyzing nucleoside-phosphate interconversions. Similar to other adenylate kinases, preferentially catalyzes the phosphorylation of the nucleoside monophosphate AMP with ATP as phosphate donor to produce ADP. In vitro, can also catalyze the phosphorylation of CMP, dAMP and dCMP and use GTP as an alternate phosphate donor. Moreover, exhibits a diphosphate kinase activity, producing ATP, CTP, GTP, UTP, TTP, dATP, dCTP and dGTP from the corresponding diphosphate substrates with either ATP or GTP as phosphate donors. For this activity shows the following substrate preference CDP &gt; UDP &gt; ADP &gt; TDP. The protein is Adenylate kinase 9 of Homo sapiens (Human).